The sequence spans 208 residues: Type 3 secretion system stator protein (208 aa).

It belongs to the SctL stator family. In terms of assembly, the core secretion machinery of the T3SS is composed of approximately 20 different proteins, including cytoplasmic components, a base, an export apparatus and a needle. This subunit is part of the cytosolic complex.

It localises to the cytoplasm. Its function is as follows. Component of the type III secretion system (T3SS), also called injectisome, which is used to inject bacterial effector proteins into eukaryotic host cells. Acts as a regulator of the HrcN/SctN ATPase activity. In Sinorhizobium fredii (strain NBRC 101917 / NGR234), this protein is Type 3 secretion system stator protein.